The sequence spans 431 residues: Histidinol dehydrogenase (431 aa).

3 residues coordinate NAD(+): Tyr-129, Gln-191, and Asn-214. Positions 237, 259, and 262 each coordinate substrate. Zn(2+) contacts are provided by Gln-259 and His-262. Active-site proton acceptor residues include Glu-327 and His-328. Substrate-binding residues include His-328, Asp-361, Glu-415, and His-420. Asp-361 contributes to the Zn(2+) binding site. Residue His-420 participates in Zn(2+) binding.

It belongs to the histidinol dehydrogenase family. The cofactor is Zn(2+).

The catalysed reaction is L-histidinol + 2 NAD(+) + H2O = L-histidine + 2 NADH + 3 H(+). It participates in amino-acid biosynthesis; L-histidine biosynthesis; L-histidine from 5-phospho-alpha-D-ribose 1-diphosphate: step 9/9. Its function is as follows. Catalyzes the sequential NAD-dependent oxidations of L-histidinol to L-histidinaldehyde and then to L-histidine. This chain is Histidinol dehydrogenase (hisD), found in Lactococcus lactis subsp. lactis (strain IL1403) (Streptococcus lactis).